We begin with the raw amino-acid sequence, 67 residues long: Peptide Ctry2606 (67 aa).

Residues 1 to 23 (MKTQTALFSFFLVLLLVATQTEG) form the signal peptide. Leu-33 is subject to Leucine amide. The propeptide occupies 37-67 (ALRNQNFVDYAFDPSLSAADWRALETLLEEY).

It belongs to the non-disulfide-bridged peptide (NDBP) superfamily. Short antimicrobial peptide (group 4) family. As to expression, expressed by the venom gland.

The protein localises to the secreted. Antimicrobial peptide. This is Peptide Ctry2606 from Chaerilus tryznai (Scorpion).